A 319-amino-acid chain; its full sequence is tRNA uridine(34) hydroxylase (319 aa).

Residues 127-221 (KQEDTVIIDA…YGKDPEVQGE (95 aa)) enclose the Rhodanese domain. Catalysis depends on cysteine 181, which acts as the Cysteine persulfide intermediate.

This sequence belongs to the TrhO family.

It catalyses the reaction uridine(34) in tRNA + AH2 + O2 = 5-hydroxyuridine(34) in tRNA + A + H2O. In terms of biological role, catalyzes oxygen-dependent 5-hydroxyuridine (ho5U) modification at position 34 in tRNAs. In Bacillus anthracis (strain A0248), this protein is tRNA uridine(34) hydroxylase.